The primary structure comprises 171 residues: Der GTPase-activating protein YihI (171 aa).

2 disordered regions span residues 1–99 (MKKP…QAEL) and 145–171 (LSYDDDEEDDEEDEKQEDMMRLLRGGN). Residues 20-30 (TREELNQEARD) show a composition bias toward basic and acidic residues. Over residues 31 to 40 (RKRLKKHRGH) the composition is skewed to basic residues. The segment covering 147–160 (YDDDEEDDEEDEKQ) has biased composition (acidic residues).

It belongs to the YihI family. As to quaternary structure, interacts with Der.

Its function is as follows. A GTPase-activating protein (GAP) that modifies Der/EngA GTPase function. May play a role in ribosome biogenesis. The protein is Der GTPase-activating protein YihI of Salmonella agona (strain SL483).